The following is a 234-amino-acid chain: Enolase-phosphatase E1 (234 aa).

The interval 212 to 234 is disordered; that stretch reads RPGNYPQPQHSHFKISSFEGLNP.

It belongs to the HAD-like hydrolase superfamily. MasA/MtnC family. In terms of assembly, monomer. It depends on Mg(2+) as a cofactor.

It catalyses the reaction 5-methylsulfanyl-2,3-dioxopentyl phosphate + H2O = 1,2-dihydroxy-5-(methylsulfanyl)pent-1-en-3-one + phosphate. It functions in the pathway amino-acid biosynthesis; L-methionine biosynthesis via salvage pathway; L-methionine from S-methyl-5-thio-alpha-D-ribose 1-phosphate: step 3/6. Its pathway is amino-acid biosynthesis; L-methionine biosynthesis via salvage pathway; L-methionine from S-methyl-5-thio-alpha-D-ribose 1-phosphate: step 4/6. Bifunctional enzyme that catalyzes the enolization of 2,3-diketo-5-methylthiopentyl-1-phosphate (DK-MTP-1-P) into the intermediate 2-hydroxy-3-keto-5-methylthiopentenyl-1-phosphate (HK-MTPenyl-1-P), which is then dephosphorylated to form the acireductone 1,2-dihydroxy-3-keto-5-methylthiopentene (DHK-MTPene). In Leptospira interrogans serogroup Icterohaemorrhagiae serovar copenhageni (strain Fiocruz L1-130), this protein is Enolase-phosphatase E1.